A 295-amino-acid chain; its full sequence is Transcriptional regulator SirC (295 aa).

The HTH araC/xylS-type domain occupies 195–292; it reads EKVYNIIISD…KITPLSFMRT (98 aa). 2 DNA-binding regions (H-T-H motif) span residues 212–233 and 259–282; these read AEVA…AAEE and ISQV…KRHF.

In terms of biological role, positive regulator of the expression of the invasion-associated type III secretion system encoded within SPI-1 (pathogenicity island 1). This chain is Transcriptional regulator SirC (sirC), found in Salmonella typhimurium (strain SL1344).